The sequence spans 268 residues: MRRIDFRFAELRANGRKALIPFITAGDPSLEATVPVMHALVRAGADVIELGVPFSDPMADGPTIQRSSERALGRGAGLAYVLEAVHEFRREDAATPVVLMGYLNPIEIHGTRRFAEAAVAAGVDGLLLVDLPPEEADETRAIFTEVGLALIALASPTTSEQRLDMLCSTAQGYLYYVSFAGVTGASNLLDTYAASDRLRQLRQRAGAPVVAGFGIKDAASAAAMAVDADGVVVGSALVAALAEADDVRSARERAEAFLAPLRQALDQA.

Catalysis depends on proton acceptor residues Glu49 and Asp60.

This sequence belongs to the TrpA family. As to quaternary structure, tetramer of two alpha and two beta chains.

It catalyses the reaction (1S,2R)-1-C-(indol-3-yl)glycerol 3-phosphate + L-serine = D-glyceraldehyde 3-phosphate + L-tryptophan + H2O. It functions in the pathway amino-acid biosynthesis; L-tryptophan biosynthesis; L-tryptophan from chorismate: step 5/5. Its function is as follows. The alpha subunit is responsible for the aldol cleavage of indoleglycerol phosphate to indole and glyceraldehyde 3-phosphate. The chain is Tryptophan synthase alpha chain from Xanthomonas oryzae pv. oryzae (strain PXO99A).